A 309-amino-acid chain; its full sequence is Wall-associated proteinase (309 aa).

2 N-linked (GlcNAc...) asparagine glycosylation sites follow: Asn-190 and Asn-295.

It localises to the secreted. It is found in the cell wall. The protein localises to the membrane. Its function is as follows. May participate in wall plasticization and/or intussusception or in cell wall turnover. The sequence is that of Wall-associated proteinase from Coccidioides posadasii (strain RMSCC 757 / Silveira) (Valley fever fungus).